A 407-amino-acid polypeptide reads, in one-letter code: Cell division protein FtsZ (407 aa).

Residues 18–22, 105–107, Glu136, Arg140, and Asp184 each bind GTP; these read GGGVN and GTG. Residues 312-407 are disordered; that stretch reads FDGGQPPARR…EELDVPDFLK (96 aa). Composition is skewed to low complexity over residues 336-348 and 368-377; these read AAPA…STRP and APATASGESS. Over residues 381-390 the composition is skewed to pro residues; that stretch reads VSPPHVPPAR. The span at 396–407 shows a compositional bias: acidic residues; that stretch reads QAEELDVPDFLK.

This sequence belongs to the FtsZ family. In terms of assembly, homodimer. Polymerizes to form a dynamic ring structure in a strictly GTP-dependent manner. Interacts directly with several other division proteins.

It is found in the cytoplasm. Its function is as follows. Essential cell division protein that forms a contractile ring structure (Z ring) at the future cell division site. The regulation of the ring assembly controls the timing and the location of cell division. One of the functions of the FtsZ ring is to recruit other cell division proteins to the septum to produce a new cell wall between the dividing cells. Binds GTP and shows GTPase activity. This is Cell division protein FtsZ from Streptomyces griseus.